The sequence spans 741 residues: Interleukin-17 receptor D (741 aa).

Positions 1–26 (MAPGRELGAFLLALLAFCGGRRLAEA) are cleaved as a signal peptide. Residues 27–301 (AGGPGGRRGA…VHSPWAGPIR (275 aa)) lie on the Extracellular side of the membrane. Residues Asn57, Asn82, Asn173, Asn208, and Asn279 are each glycosylated (N-linked (GlcNAc...) asparagine). The helical transmembrane segment at 302 to 322 (AIAITVPLVVISAFATLFTVM) threads the bilayer. The Cytoplasmic portion of the chain corresponds to 323-741 (CRKKQQENIY…TDELQAIAPL (419 aa)). One can recognise an SEFIR domain in the interval 357-510 (RPKVFICYSS…LMDNLPQLYS (154 aa)). The segment covering 688 to 703 (TETSSITGSVSSSSGL) has biased composition (low complexity). Residues 688 to 708 (TETSSITGSVSSSSGLGEEEP) are disordered.

It is found in the membrane. Its function is as follows. Feedback inhibitor of fibroblast growth factor mediated Ras-MAPK signaling and ERK activation. May inhibit FGF-induced FGFR1 tyrosine phosphorylation. Inhibits TGFB-induced epithelial-to-mesenchymal transition in lens epithelial cells. This Gallus gallus (Chicken) protein is Interleukin-17 receptor D (IL17RD).